The following is a 357-amino-acid chain: MTTLKNDRFLRALLREPVDTTPIWMMRQAGRYLPEYRETRSKAGDFLSLCKNTEFACEVTLQPLRRYDLDAAILFSDILTIPDALGLGLYFETGEGPKFHKTVRTEQDVANLPKLNAKADLDYVMNAVSTIRSALGGQVPLIGFSGSPWTLATYMVEGGSSKEFRFTKQMMYAQPEVLHALLDHLADSVIDYLNAQIDAGAQAIQIFDSWGGALAHREYVEFSLNYMKKIIAGLQREKDGRRIPVIVFTKGGGQWLEPMITTGADALGLDWTTPLNTARTTVAGRVALQGNLDPAVLYGSAASIEKAVKAMLDDAYANGEKTGYVANLGHGITQWVDPAQPKIFVDTVHEYSAKYLG.

Residues 27 to 31 (RQAGR), D77, Y154, S209, and H330 each bind substrate.

It belongs to the uroporphyrinogen decarboxylase family. As to quaternary structure, homodimer.

The protein resides in the cytoplasm. It catalyses the reaction uroporphyrinogen III + 4 H(+) = coproporphyrinogen III + 4 CO2. The protein operates within porphyrin-containing compound metabolism; protoporphyrin-IX biosynthesis; coproporphyrinogen-III from 5-aminolevulinate: step 4/4. Functionally, catalyzes the decarboxylation of four acetate groups of uroporphyrinogen-III to yield coproporphyrinogen-III. The chain is Uroporphyrinogen decarboxylase from Acinetobacter baumannii (strain AB0057).